The chain runs to 100 residues: MTIFNAVDKFTMMSGDRVKIKDLLSSRLTECGWRDEVRLLCRSILQEKGAISSFTVEQLVTEVTPRARSLVPDAVKKELLIKIRTIFDENEADDIDPEEA.

Belongs to the ENY2 family. Component of the nuclear pore complex (NPC)-associated AMEX complex (anchoring and mRNA export complex), composed of at least e(y)2 and xmas-2. Component of the SAGA transcription coactivator-HAT complexes, at least composed of Ada2b, e(y)2, Pcaf/Gcn5, Taf10 and Nipped-A/Trrap. Within the SAGA complex, e(y)2, Sgf11, and not/nonstop form an additional subcomplex of SAGA called the DUB module (deubiquitination module). Component of the THO complex, composed of at least e(y)2, HPR1, THO2, THOC5, THOC6 and THOC7. Interacts with e(y)1. Interacts with su(Hw) (via zinc fingers). Interacts with xmas-2; required for localization to the nuclear periphery. Interacts with the nuclear pore complex (NPC).

The protein resides in the nucleus. The protein localises to the nucleoplasm. It localises to the cytoplasm. Its function is as follows. Involved in mRNA export coupled transcription activation by association with both the AMEX and the SAGA complexes. The SAGA complex is a multiprotein complex that activates transcription by remodeling chromatin and mediating histone acetylation and deubiquitination. Within the SAGA complex, participates in a subcomplex that specifically deubiquitinates histone H2B. The SAGA complex is recruited to specific gene promoters by activators, where it is required for transcription. Required for nuclear receptor-mediated transactivation. Involved in transcription elongation by recruiting the THO complex onto nascent mRNA. The AMEX complex functions in docking export-competent ribonucleoprotein particles (mRNPs) to the nuclear entrance of the nuclear pore complex (nuclear basket). AMEX participates in mRNA export and accurate chromatin positioning in the nucleus by tethering genes to the nuclear periphery. In Drosophila pseudoobscura pseudoobscura (Fruit fly), this protein is Enhancer of yellow 2 transcription factor.